Here is a 224-residue protein sequence, read N- to C-terminus: 4'-phosphopantetheinyl transferase (224 aa).

Mg(2+)-binding residues include aspartate 107, glutamate 109, and glutamate 151. Residues glycine 158–cysteine 189 form a peptidyl carrier protein binding region.

This sequence belongs to the P-Pant transferase superfamily. Gsp/Sfp/HetI/AcpT family. The cofactor is Mg(2+).

It catalyses the reaction apo-[peptidyl-carrier protein] + CoA = holo-[peptidyl-carrier protein] + adenosine 3',5'-bisphosphate + H(+). Functionally, may activate the peptidyl carrier protein (PCP) domains of surfactin synthetase SRF1/2/3 and iturin A synthetase, by transferring the 4'-phosphopantetheinyl moiety of coenzyme A (CoA) to a serine residue. Required for the coproduction of the lipopeptide antibiotics, iturin A and surfactin. This chain is 4'-phosphopantetheinyl transferase (lpa-14), found in Bacillus subtilis.